Consider the following 162-residue polypeptide: NADH-quinone oxidoreductase subunit I (162 aa).

4Fe-4S ferredoxin-type domains follow at residues 53–83 (LRRY…IESE) and 93–122 (TRYD…ETRV). Positions 63, 66, 69, 73, 102, 105, 108, and 112 each coordinate [4Fe-4S] cluster.

This sequence belongs to the complex I 23 kDa subunit family. In terms of assembly, NDH-1 is composed of 14 different subunits. Subunits NuoA, H, J, K, L, M, N constitute the membrane sector of the complex. Requires [4Fe-4S] cluster as cofactor.

The protein localises to the cell inner membrane. It carries out the reaction a quinone + NADH + 5 H(+)(in) = a quinol + NAD(+) + 4 H(+)(out). In terms of biological role, NDH-1 shuttles electrons from NADH, via FMN and iron-sulfur (Fe-S) centers, to quinones in the respiratory chain. The immediate electron acceptor for the enzyme in this species is believed to be ubiquinone. Couples the redox reaction to proton translocation (for every two electrons transferred, four hydrogen ions are translocated across the cytoplasmic membrane), and thus conserves the redox energy in a proton gradient. In Nitrosomonas eutropha (strain DSM 101675 / C91 / Nm57), this protein is NADH-quinone oxidoreductase subunit I.